Consider the following 160-residue polypeptide: MEKDDLTHFNDEKRAKMVDVTSKSETKRRAIARATIHMNEETLARIHAGKIAKGDVLAVAQVAGIMAAKKTSELIPMCHPIMTTKADISFEDDGKTALTITSEVVTVGKTGVEMEALTAVTIAALTIYDMCKAMDKGMRIEKTYLVEKTGGKSGTFKAEA.

Residues 77–79 and 114–115 contribute to the substrate site; these read MCH and ME. Asp129 is a catalytic residue.

The protein belongs to the MoaC family. Homohexamer; trimer of dimers.

The catalysed reaction is (8S)-3',8-cyclo-7,8-dihydroguanosine 5'-triphosphate = cyclic pyranopterin phosphate + diphosphate. It functions in the pathway cofactor biosynthesis; molybdopterin biosynthesis. Functionally, catalyzes the conversion of (8S)-3',8-cyclo-7,8-dihydroguanosine 5'-triphosphate to cyclic pyranopterin monophosphate (cPMP). The sequence is that of Cyclic pyranopterin monophosphate synthase from Listeria monocytogenes serotype 4b (strain F2365).